The primary structure comprises 493 residues: Cytochrome P450 monooxygenase astA (493 aa).

A helical membrane pass occupies residues 5 to 25; the sequence is EIILLGLAALAVTYQVIVWIY. Asn-174 and Asn-286 each carry an N-linked (GlcNAc...) asparagine glycan. Residue Cys-433 coordinates heme.

The protein belongs to the cytochrome P450 family. The cofactor is heme.

It is found in the membrane. The enzyme catalyses asperterpenoid A + reduced [NADPH--hemoprotein reductase] + O2 = asperterpenoid C + oxidized [NADPH--hemoprotein reductase] + H2O + H(+). It functions in the pathway secondary metabolite biosynthesis; terpenoid biosynthesis. Cytochrome P450 monooxygenase; part of the gene cluster that mediates the biosynthesis of the asperterpenoids, sesterterpenes that exhibit anti-tuberculosis activity. The first step of the pathway is performed by the sesterterpene synthase astC that possesses both prenyl transferase and terpene cyclase activity, converting isopentenyl diphosphate and dimethylallyl diphosphate into geranylfarnesyl diphosphate (GFPP) and further converting GFPP into preasperterpenoid A, respectively. The cytochrome P450 monooxygenase astB then dually oxidizes preasperterpenoid A to produce asperterpenoid A along with a minor product, asperterpenoid B. Finally, the cytochrome P450 monooxygenase astA converts asperterpenoid A into asperterpenoid C. This chain is Cytochrome P450 monooxygenase astA, found in Talaromyces wortmannii (Penicillium wortmannii).